The primary structure comprises 921 residues: MASKGTEGGHGGVERKEQQQQRGYQLPRDSRGSLEVFNPSSASSFRTAAAAPKSASPFLAIPDREEDNVVAQQRAAEWGLVLQTDHHTGLPQGVSARPSSGSARTSSEDNPQQQQSAAAIPRVSEELRAALSAFQQTFVVSDATHPNHPIMYASAGFFNMTGYTSKEVVGRNCRFLQGSGTDPHEIDKIRQSLANGSNYCGRILNYKKDGTPFWNLLTIAPIKDEDGRLLKFIGMQVEVSKYTEGKKDTVVRPNGLSESLIKYDARQKDHARSSVSELLLALKNPRSLSESSNNTLKRKSQESLSMSMTEVPSKRSSESGSRRNSRSGTRSSLQKINEVPDQGNRTRKSGLRAFMGFLGMGHGSVEKNMLKPRDEDPLIDSDDERPESFEDEFRRKEMRRGIDLATTLERIEKNFVITDPRLPDNPIIFASDSFLQLTEYNREEILGRNCRFLQGPETDRATVRKIRDAIDNQAEVTVQLINYTKSGKKFWNLFHLQPMRDQKGDVQYFIGVQLDGTEHVQDDAAKEGVVLVKKTADNIDEAAKELPDANLRPEDLWANHSKVVLPNPHMKDTASWRAIQKVLESGESIGLKHFRPVKPLGSGDTGSVHLVELLNTGEYFAMKAMDKSIMLNRNKVHRATAERQILDLLDHPFLPTLYASFQTKTHICLITDYCPGGELFVLLDNQPLKVLHEDAVRFYAAEVVVALEYLHCQGIIYRDLKPENILLHRDGHISLTDFDLSCLTSCRPQVFLPEDADEKKGRKNGSYPIFFAEPMRASNSFVGTEEYIAPEIITGAGHTSAVDWWALGILLYEMLYGYTPFRGKTRQRTFANILHKDIRFPASISVSLAARQLMYRLLHRDPANRLGSYEGANEIKGHPFFRGINWPLIRATAPPKLEIPLFSKDDMEKKGLVTNNRTDMF.

The segment covering 1–11 (MASKGTEGGHG) has biased composition (gly residues). Disordered regions lie at residues 1 to 59 (MASK…SPFL) and 88 to 118 (TGLP…QSAA). Positions 40-51 (SSASSFRTAAAA) are enriched in low complexity. The segment covering 97 to 117 (RPSSGSARTSSEDNPQQQQSA) has biased composition (polar residues). Residues 123-197 (VSEELRAALS…KIRQSLANGS (75 aa)) enclose the PAS 1 domain. Residues 172 to 177 (NCRFLQ), Arg-190, Asn-205, Asn-215, and Gln-236 each bind FMN. Cys-173 carries the post-translational modification S-4a-FMN cysteine. A PAC 1 domain is found at 197-251 (SNYCGRILNYKKDGTPFWNLLTIAPIKDEDGRLLKFIGMQVEVSKYTEGKKDTVV). The segment covering 286–295 (RSLSESSNNT) has biased composition (polar residues). Disordered regions lie at residues 286–347 (RSLS…NRTR) and 364–390 (SVEK…ESFE). Composition is skewed to basic and acidic residues over residues 312–321 (PSKRSSESGS) and 364–376 (SVEK…RDED). In terms of domain architecture, PAS 2 spans 400–473 (RGIDLATTLE…RKIRDAIDNQ (74 aa)). Residues 449–454 (NCRFLQ), Arg-467, Asn-482, Asn-492, and Gln-513 contribute to the FMN site. Cys-450 is modified (S-4a-FMN cysteine). Residues 474 to 528 (AEVTVQLINYTKSGKKFWNLFHLQPMRDQKGDVQYFIGVQLDGTEHVQDDAAKEG) form the PAC 2 domain. One can recognise a Protein kinase domain in the interval 594 to 881 (FRPVKPLGSG…ANEIKGHPFF (288 aa)). Residues 600–608 (LGSGDTGSV) and Lys-623 each bind ATP. The active-site Proton acceptor is Asp-719.

This sequence belongs to the protein kinase superfamily. Ser/Thr protein kinase family. Homodimer. FMN is required as a cofactor. Post-translationally, autophosphorylated in response to blue light irradiation. In terms of processing, 2 molecules of FMN bind covalently to cysteines after exposure to blue light and are reversed in the dark. In terms of tissue distribution, highly expressed in coleoptiles of dark-grown seedlings.

The catalysed reaction is L-seryl-[protein] + ATP = O-phospho-L-seryl-[protein] + ADP + H(+). It carries out the reaction L-threonyl-[protein] + ATP = O-phospho-L-threonyl-[protein] + ADP + H(+). Its function is as follows. Protein kinase that acts as a blue light photoreceptor in a signal-transduction pathway for phototropic responses. Regulates a wide range of physiological activities in plants that maximize the efficiency of photosynthesis, such as chloroplast relocations, stomata opening, and leaf expansion. The polypeptide is Phototropin-1A (PHOT1A) (Oryza sativa subsp. japonica (Rice)).